We begin with the raw amino-acid sequence, 287 residues long: Elongation factor Ts (287 aa).

Residues 80 to 83 form an involved in Mg(2+) ion dislocation from EF-Tu region; it reads TDFL.

Belongs to the EF-Ts family.

It localises to the cytoplasm. Its function is as follows. Associates with the EF-Tu.GDP complex and induces the exchange of GDP to GTP. It remains bound to the aminoacyl-tRNA.EF-Tu.GTP complex up to the GTP hydrolysis stage on the ribosome. This chain is Elongation factor Ts, found in Ectopseudomonas mendocina (strain ymp) (Pseudomonas mendocina).